Reading from the N-terminus, the 140-residue chain is uncharacterized protein (140 aa).

The VOC domain occupies 3 to 131 (RLDHIGIAVF…NGVLVELCEP (129 aa)). 4 residues coordinate a divalent metal cation: H6, E53, H77, and E127.

This sequence belongs to the methylmalonyl-CoA epimerase family.

This is an uncharacterized protein from Bacillus subtilis (strain 168).